A 232-amino-acid chain; its full sequence is MQKYALHAYPVMALMVATLTGCAWIPAKPLVQGATTAQPIPGPVPVANGSIFQSAQPINYGYQPLFEDRRPRNIGDTLTIVLQENVSASKSSSANASRDGKTSFGFDTVPRYLQGLFGNSRADMEASGGNSFNGKGGANASNTFSGTLTVTVDQVLANGNLHVVGEKQIAINQGTEFIRFSGVVNPRTISGSNSVPSTQVADARIEYVGNGYLNEAQNMGWLQRFFLNLSPM.

A signal peptide spans 1–21 (MQKYALHAYPVMALMVATLTG). Cysteine 22 carries N-palmitoyl cysteine lipidation. Cysteine 22 carries the S-diacylglycerol cysteine lipid modification.

It belongs to the FlgH family. The basal body constitutes a major portion of the flagellar organelle and consists of four rings (L,P,S, and M) mounted on a central rod.

The protein resides in the cell outer membrane. It is found in the bacterial flagellum basal body. Functionally, assembles around the rod to form the L-ring and probably protects the motor/basal body from shearing forces during rotation. This is Flagellar L-ring protein from Salmonella gallinarum (strain 287/91 / NCTC 13346).